Reading from the N-terminus, the 109-residue chain is Cell division protein ZapA (109 aa).

Residues 21–97 adopt a coiled-coil conformation; the sequence is PDQRDALNQA…QTIEQALLDQ (77 aa).

It belongs to the ZapA family. Type 1 subfamily. Homodimer. Interacts with FtsZ.

Its subcellular location is the cytoplasm. Activator of cell division through the inhibition of FtsZ GTPase activity, therefore promoting FtsZ assembly into bundles of protofilaments necessary for the formation of the division Z ring. It is recruited early at mid-cell but it is not essential for cell division. The protein is Cell division protein ZapA of Salmonella agona (strain SL483).